The sequence spans 622 residues: 1-deoxy-D-xylulose-5-phosphate synthase (622 aa).

Residues His80 and 121–123 each bind thiamine diphosphate; that span reads GHS. Asp152 serves as a coordination point for Mg(2+). Thiamine diphosphate-binding positions include 153–154, Asn181, Tyr288, and Glu370; that span reads GA. Asn181 serves as a coordination point for Mg(2+).

This sequence belongs to the transketolase family. DXPS subfamily. As to quaternary structure, homodimer. The cofactor is Mg(2+). Thiamine diphosphate serves as cofactor.

It carries out the reaction D-glyceraldehyde 3-phosphate + pyruvate + H(+) = 1-deoxy-D-xylulose 5-phosphate + CO2. It functions in the pathway metabolic intermediate biosynthesis; 1-deoxy-D-xylulose 5-phosphate biosynthesis; 1-deoxy-D-xylulose 5-phosphate from D-glyceraldehyde 3-phosphate and pyruvate: step 1/1. Its function is as follows. Catalyzes the acyloin condensation reaction between C atoms 2 and 3 of pyruvate and glyceraldehyde 3-phosphate to yield 1-deoxy-D-xylulose-5-phosphate (DXP). The chain is 1-deoxy-D-xylulose-5-phosphate synthase from Shewanella amazonensis (strain ATCC BAA-1098 / SB2B).